Consider the following 481-residue polypeptide: Heat stress transcription factor A-1b (481 aa).

Over residues Met1–Pro16 the composition is skewed to low complexity. The interval Met1–Asn23 is disordered. Residues Val25–Pro119 mediate DNA binding. A hydrophobic repeat HR-A/B region spans residues Ala138–Val204. Polar residues predominate over residues Leu213–Gly227. Positions Leu213–Asp244 are disordered. Residues Asn229–Arg233 carry the Nuclear localization signal motif. The segment covering Leu234 to Gly243 has biased composition (basic and acidic residues). The AHA motif lies at Asp418–Val427. A Nuclear export signal motif is present at residues Leu467–Leu474.

Belongs to the HSF family. Class A subfamily. Homotrimer. Binds to HSBP. Post-translationally, exhibits temperature-dependent phosphorylation.

It is found in the cytoplasm. Its subcellular location is the nucleus. Transcriptional activator that specifically binds DNA sequence 5'-AGAAnnTTCT-3' known as heat shock promoter elements (HSE). This chain is Heat stress transcription factor A-1b (HSFA1B), found in Arabidopsis thaliana (Mouse-ear cress).